A 700-amino-acid chain; its full sequence is Dipeptidyl aminopeptidase 1 (700 aa).

Positions 1–27 are cleaved as a signal peptide; sequence MAKRIFSVSFLLVLLNVLHICIKFSVA. Residues N52, N144, N265, N337, and N373 are each glycosylated (N-linked (GlcNAc...) asparagine). Positions 210 to 369 are excised as a propeptide; that stretch reads DNVNEIKHLD…SPKRELEINE (160 aa). Intrachain disulfides connect C395–C446 and C439–C478. C398 is an active-site residue. Sulfothreonine is present on T416. F450 and Y452 together coordinate chloride. N-linked (GlcNAc...) asparagine glycosylation is found at N481, N490, and N507. Chloride is bound at residue Y549. The N-linked (GlcNAc...) asparagine glycan is linked to N615. Catalysis depends on residues H624 and N648. N-linked (GlcNAc...) asparagine glycosylation occurs at N667.

Belongs to the peptidase C1 family. As to quaternary structure, monomer. The cofactor is chloride.

The protein localises to the vacuole lumen. The protein resides in the parasitophorous vacuole lumen. The catalysed reaction is Release of an N-terminal dipeptide, Xaa-Yaa-|-Zaa-, except when Xaa is Arg or Lys, or Yaa or Zaa is Pro.. Its function is as follows. Thiol protease that cleaves dipeptides from the N-terminus of protein substrates. Active against a broad range of dipeptide substrates composed of both polar and hydrophobic amino acids. Proline cannot occupy the P1 position and arginine or lysine cannot occupy the P2 position of the substrate. Involved in host hemoglobin degradation by generating dipeptides from hemoglobin-derived oligopeptides. This Plasmodium falciparum (isolate 3D7) protein is Dipeptidyl aminopeptidase 1.